Consider the following 265-residue polypeptide: Tryptophan synthase alpha chain (265 aa).

Catalysis depends on proton acceptor residues Glu-49 and Glu-60.

Belongs to the TrpA family. As to quaternary structure, tetramer of two alpha and two beta chains.

It catalyses the reaction (1S,2R)-1-C-(indol-3-yl)glycerol 3-phosphate + L-serine = D-glyceraldehyde 3-phosphate + L-tryptophan + H2O. Its pathway is amino-acid biosynthesis; L-tryptophan biosynthesis; L-tryptophan from chorismate: step 5/5. Its function is as follows. The alpha subunit is responsible for the aldol cleavage of indoleglycerol phosphate to indole and glyceraldehyde 3-phosphate. This Herminiimonas arsenicoxydans protein is Tryptophan synthase alpha chain.